Here is a 566-residue protein sequence, read N- to C-terminus: Lamin-1 (566 aa).

A disordered region spans residues 1–37 (MSSRKGTRSSRIVTLERSANSSLSNNGGGDDSFGSTL). Position 2 is an N-acetylserine (serine 2). A head region spans residues 13 to 47 (VTLERSANSSLSNNGGGDDSFGSTLLETSRLQEKD). One can recognise an IF rod domain in the interval 45-387 (EKDHLTSLNS…ALLEGEEERL (343 aa)). The coil 1A stretch occupies residues 48-82 (HLTSLNSRLATYIDKVRQLEQENNRLQVQIRDIEV). The segment at 83–94 (VEKKEKSNLADR) is linker 1. The coil 1B stretch occupies residues 95–228 (FEAEKARLRR…AFALQQHKGE (134 aa)). Residues 229–256 (LEEVRHKRQVDMTTYAKQINDEYQSKLQ) form a linker 2 region. The tract at residues 257-385 (DQIEEMRAQF…YQALLEGEEE (129 aa)) is coil 2. The tract at residues 386 to 566 (RLNLTQEAPQ…SDPADRCSIM (181 aa)) is tail. Residues 435-550 (RRSKLNKETV…DTVSSITVEF (116 aa)) form the LTD domain. The segment at 528-566 (GDNPSARLEDSEGDTVSSITVEFSESSDPSDPADRCSIM) is disordered. A compositionally biased stretch (polar residues) spans 541–556 (DTVSSITVEFSESSDP). Cysteine methyl ester is present on cysteine 563. Cysteine 563 is lipidated: S-farnesyl cysteine. The propeptide at 564-566 (SIM) is removed in mature form.

This sequence belongs to the intermediate filament family. As to quaternary structure, interacts with LEM domain proteins lem-2 and emr-1. May interact with unc-84; this interaction may be required to complete the connection between the nuclear lamina and the cytoskeleton. In terms of tissue distribution, ubiquitous. Expressed in all cells, except in cells undergoing spermatogenesis.

It is found in the nucleus envelope. Its subcellular location is the nucleus inner membrane. Functionally, major component of the nuclear lamina, a fibrous layer on the nucleoplasmic side of the inner nuclear membrane. Provides a framework for the nuclear envelope and probably also interacts with chromatin. Essential to maintain the shape and integrity of the nucleus, and for DNA replication. Involved in spatial organization of nuclear pore complexes. It is not a target for ced-3 during apoptosis, suggesting that lamin cleavage is not essential for apoptosis in C.elegans. This chain is Lamin-1, found in Caenorhabditis elegans.